Reading from the N-terminus, the 200-residue chain is Late embryogenesis abundant protein 19 (200 aa).

Disordered regions lie at residues 1 to 145 (MASH…KTGS) and 172 to 200 (TEDEAGTDDGANKDTSATAAATETTARDH). Basic and acidic residues-rich tracts occupy residues 13 to 23 (GETKAHTEEKA), 30 to 42 (SKDKASEAKDRAS), 53 to 81 (QDTKEATKEKAQAAKERASETAQAAKDKT), 88 to 97 (ARDKAAESKD), and 105 to 114 (EKTEQAKQKA). The stretch at 52 to 81 (GQDTKEATKEKAQAAKERASETAQAAKDKT) forms a coiled coil. Composition is skewed to low complexity over residues 115 to 130 (AETAGAAKQKTAETAQ) and 186 to 200 (TSATAAATETTARDH).

It belongs to the LEA type 4 family.

Involved in response to stress. The chain is Late embryogenesis abundant protein 19 from Oryza sativa subsp. japonica (Rice).